The sequence spans 482 residues: UDP-glucose 6-dehydrogenase 2 (482 aa).

NAD(+) is bound by residues 8-13 (GAGYVG), D33, R38, 86-90 (VNTPT), 127-128 (ST), and E163. Residues 159-163 (EFLAE), 218-225 (KLAANAFL), and 258-271 (RIGPRFLSASVGFG) each bind substrate. Catalysis depends on C274, which acts as the Nucleophile. 274-277 (CFQK) lines the NAD(+) pocket. 336 to 337 (FK) serves as a coordination point for substrate. Residue R344 coordinates NAD(+). S395 is subject to Phosphoserine. Position 449 (R449) interacts with substrate.

This sequence belongs to the UDP-glucose/GDP-mannose dehydrogenase family.

The enzyme catalyses UDP-alpha-D-glucose + 2 NAD(+) + H2O = UDP-alpha-D-glucuronate + 2 NADH + 3 H(+). It functions in the pathway nucleotide-sugar biosynthesis; UDP-alpha-D-glucuronate biosynthesis; UDP-alpha-D-glucuronate from UDP-alpha-D-glucose: step 1/1. Involved in the biosynthesis of UDP-glucuronic acid (UDP-GlcA), providing nucleotide sugars for cell-wall polymers. This Oryza sativa subsp. japonica (Rice) protein is UDP-glucose 6-dehydrogenase 2 (UGD2).